A 448-amino-acid chain; its full sequence is Lipoamide acyltransferase component of branched-chain alpha-keto acid dehydrogenase complex, mitochondrial (448 aa).

The region spanning 30–105 is the Lipoyl-binding domain; it reads VVQFKLSDIG…RVGQALIDVE (76 aa). Lys-71 is modified (N6-lipoyllysine). Disordered regions lie at residues 108-146 and 191-211; these read GNVEEPEQPKKEAASSSPEAPKSSAPKAPESAHSEGKVL and TSGSTNIRTTHQAPQPSSKSY. The span at 121-136 shows a compositional bias: low complexity; sequence ASSSPEAPKSSAPKAP. Positions 146–183 constitute a Peripheral subunit-binding (PSBD) domain; it reads LATPAVRRIAIENKIKLAEVRGTGKDGRVLKEDVLKFL. Positions 191-210 are enriched in polar residues; sequence TSGSTNIRTTHQAPQPSSKS. Positions 257, 272, 315, 365, 366, 390, and 392 each coordinate CoA. Catalysis depends on residues His-418 and Asp-422.

It belongs to the 2-oxoacid dehydrogenase family. Requires (R)-lipoate as cofactor. In terms of tissue distribution, ubiquitously expressed.

It is found in the mitochondrion matrix. The protein localises to the cytoplasm. Its subcellular location is the cytosol. The protein resides in the cell projection. It localises to the dendrite. It is found in the cilium. It catalyses the reaction N(6)-[(R)-dihydrolipoyl]-L-lysyl-[protein] + 2-methylpropanoyl-CoA = N(6)-[(R)-S(8)-2-methylpropanoyldihydrolipoyl]-L-lysyl-[protein] + CoA. In terms of biological role, the branched-chain alpha-keto dehydrogenase complex catalyzes the overall conversion of alpha-keto acids to acyl-CoA and CO(2). It contains multiple copies of three enzymatic components: branched-chain alpha-keto acid decarboxylase (E1), lipoamide acyltransferase (E2) and lipoamide dehydrogenase (E3). Within this complex, the catalytic function of this enzyme is to accept, and to transfer to coenzyme A, acyl groups that are generated by the branched-chain alpha-keto acid decarboxylase component. Required for the catabolism of branched-chain amino acids and the subsequent synthesis of monomethyl branched-chain fatty acids, which are important for regulating postembryonic growth. The protein is Lipoamide acyltransferase component of branched-chain alpha-keto acid dehydrogenase complex, mitochondrial of Caenorhabditis elegans.